The chain runs to 249 residues: Putative protein SNX29P2 (249 aa).

Disordered regions lie at residues 109-171 and 188-249; these read QVTN…SNSW and DVKS…PGFK. A compositionally biased stretch (low complexity) spans 156 to 170; sequence SPFGPNSNGSQSSNS. Residues 193-204 show a composition bias toward acidic residues; that stretch reads DDEDVDENEDDV. Over residues 226–242 the composition is skewed to polar residues; sequence HSVTQAGVQWHDLSSLQ.

It belongs to the sorting nexin family.

In Homo sapiens (Human), this protein is Putative protein SNX29P2 (SNX29P2).